A 162-amino-acid chain; its full sequence is Anthrone oxygenase nsrD (162 aa).

The next 3 helical transmembrane spans lie at 17–37 (FLSG…LDTI), 54–74 (GSIY…YVAL), and 86–106 (PYVL…WVMV). An N-linked (GlcNAc...) asparagine glycan is attached at asparagine 109. The helical transmembrane segment at 130 to 150 (LVVKWAWLHVVRSLYPLFGAF) threads the bilayer.

Belongs to the anthrone oxygenase family.

Its subcellular location is the membrane. The enzyme catalyses emodin anthrone + O2 = emodin + H2O + H(+). Its pathway is secondary metabolite biosynthesis. Anthrone oxygenase; part of the gene cluster that mediates the biosynthesis of the tetrahydroxanthone dimer neosartorin, which exhibits antibacterial activity. The two different monomeric units appear to be synthesized by the same set of enzymes, among which the Baeyer-Villiger monooxygenase nsrF is the key enzyme for the divergence of the biosynthetic routes. The pathway begins with the synthesis of atrochrysone thioester by the polyketide synthase nsrB. The atrochrysone carboxyl ACP thioesterase nsrC then breaks the thioester bond and releases the atrochrysone carboxylic acid from AacuL. Atrochrysone carboxylic acid is decarboxylated by the decarboxylase nsrE, and oxidized by the anthrone oxygenase nsrD to yield emodin. Emodin is then reduced to emodin hydroquinone by the oxidoreductase nsrR. A-ring reduction by the short chain dehydrogenase nsrJ, dehydration by the scytalone dehydratase-like protein nsrI and probable spontaneous re-oxidation, results in overall deoxygenation to chrysophanol. The Baeyer-Villiger monooxygenase nsrF accepts chrysophanol as a substrate to insert one oxygen atom at two different positions to yield the precursors of both monomric units. NsrF is promiscuous/flexible in interacting with the 2 (non methylated and methylated) aromatic rings of chrysophanol, thus diverging the biosynthetic pathway at this point. After the hydrolysis of the lactones, methylesterification by the methyltransferase nsrG yields respectively moniliphenone and 2,2',6'-trihydroxy-4-methyl-6-methoxya-cyldiphenylmethanone. The next steps are the hydroxylation by the FAD-dependent monooxygenase nsrK, followed by isomerization by the monooxygenase nsrQ. The short chain dehydrogenase/reductase nsrO then catalyzes the C-5 ketoreduction to give the xanthone skeleton of blennolide C and 5-acetylblennolide A. The acetyltransferase nsrL has a strict substrate specificity and uses only blennolide A but not blennolide C to yield 5-acetylblennolide A as the single-acetylated product. In the final step of the biosynthesis, the heterodimerization of the 2 xanthones, blennolide C and 5-acetylblennolide A, is catalyzed by the cytochrome P450 monooxygenase nsrP. NsrP can utilize at least three different xanthones as its substrates to perform the dimerization reaction. This is Anthrone oxygenase nsrD from Aspergillus novofumigatus (strain IBT 16806).